The primary structure comprises 229 residues: Cytidylate kinase (229 aa).

12–20 (GPSGSGKGT) is an ATP binding site.

Belongs to the cytidylate kinase family. Type 1 subfamily.

Its subcellular location is the cytoplasm. It carries out the reaction CMP + ATP = CDP + ADP. The enzyme catalyses dCMP + ATP = dCDP + ADP. In Pseudomonas fluorescens (strain Pf0-1), this protein is Cytidylate kinase.